The primary structure comprises 251 residues: Seminal metalloprotease 1 (251 aa).

Residues 1–18 form the signal peptide; that stretch reads MFPQIWGVIFLFTPTVFS. The region spanning 44–248 is the Peptidase M12A domain; the sequence is NGIVNQIYHW…RKLNKMYRCP (205 aa). N-linked (GlcNAc...) asparagine glycosylation is found at asparagine 55 and asparagine 120. Cystine bridges form between cysteine 87–cysteine 247 and cysteine 111–cysteine 136. Histidine 144 contacts Zn(2+). The active site involves glutamate 145. Positions 148 and 154 each coordinate Zn(2+). N-linked (GlcNAc...) asparagine glycosylation occurs at asparagine 185.

Requires Zn(2+) as cofactor. In terms of processing, undergoes cleavage in the male during mating with a cleaved product detected in the ejaculatory duct and/or bulb of males by 8-10 minutes after the start of mating. Further cleavage occurs in the mated female. May undergo cleavage in a two-step process where it is first cleaved by Sems, making it susceptible to activational cleavage which may be carried out by another protease or by autocleavage. As to expression, produced in the male accessory glands and secreted into seminal fluid. In mated females, confined to the reproductive tract and also detected in eggs laid by mated females (at protein level).

The protein localises to the secreted. Its function is as follows. Seminal fluid metalloprotease which is transferred to females during mating and is required for processing of two other seminal fluid proteins Acp26Aa and Acp36DE in mated females. This is Seminal metalloprotease 1 from Drosophila melanogaster (Fruit fly).